A 349-amino-acid polypeptide reads, in one-letter code: Uroporphyrinogen decarboxylase (349 aa).

Residues 23–27 (RQAGR), Asp-71, Tyr-148, Ser-203, and His-317 contribute to the substrate site.

The protein belongs to the uroporphyrinogen decarboxylase family. As to quaternary structure, homodimer.

Its subcellular location is the cytoplasm. It carries out the reaction uroporphyrinogen III + 4 H(+) = coproporphyrinogen III + 4 CO2. It functions in the pathway porphyrin-containing compound metabolism; protoporphyrin-IX biosynthesis; coproporphyrinogen-III from 5-aminolevulinate: step 4/4. Catalyzes the decarboxylation of four acetate groups of uroporphyrinogen-III to yield coproporphyrinogen-III. The sequence is that of Uroporphyrinogen decarboxylase from Sorangium cellulosum (strain So ce56) (Polyangium cellulosum (strain So ce56)).